A 602-amino-acid polypeptide reads, in one-letter code: Protein DGS1, mitochondrial (602 aa).

The next 2 membrane-spanning stretches (helical) occupy residues 300 to 320 and 465 to 485; these read LYWV…IWLL and INFA…MLTV.

As to quaternary structure, component of a mitochondrial large protein complex that contains, at least, MIC60, DGS1, TOM40 (e.g. TOM40-1), TOM20 proteins (e.g. TOM20-2), and petC/RISP.

It localises to the mitochondrion outer membrane. Involved in galactoglycerolipid biosynthesis. Contributes to an intracellular signal that regulates an alternative DGD1-independent galactoglycerolipid biosynthesis pathway in chloroplasts. Being involved in mitochondrial lipid homeostasis, modulates mitochondrion biogenesis and physiology, as well as stress responses. In Arabidopsis thaliana (Mouse-ear cress), this protein is Protein DGS1, mitochondrial.